The chain runs to 421 residues: UDP-N-acetylglucosamine 1-carboxyvinyltransferase (421 aa).

Residue 22–23 participates in phosphoenolpyruvate binding; it reads KN. Arg91 is a binding site for UDP-N-acetyl-alpha-D-glucosamine. Catalysis depends on Cys115, which acts as the Proton donor. Position 115 is a 2-(S-cysteinyl)pyruvic acid O-phosphothioketal (Cys115). UDP-N-acetyl-alpha-D-glucosamine contacts are provided by residues 120–124, Asp306, and Ile328; that span reads RPIDL.

Belongs to the EPSP synthase family. MurA subfamily.

The protein resides in the cytoplasm. It carries out the reaction phosphoenolpyruvate + UDP-N-acetyl-alpha-D-glucosamine = UDP-N-acetyl-3-O-(1-carboxyvinyl)-alpha-D-glucosamine + phosphate. The protein operates within cell wall biogenesis; peptidoglycan biosynthesis. Its function is as follows. Cell wall formation. Adds enolpyruvyl to UDP-N-acetylglucosamine. In Methylacidiphilum infernorum (isolate V4) (Methylokorus infernorum (strain V4)), this protein is UDP-N-acetylglucosamine 1-carboxyvinyltransferase.